The following is a 324-amino-acid chain: tRNA U34 carboxymethyltransferase (324 aa).

Carboxy-S-adenosyl-L-methionine is bound by residues Lys91, Trp105, Lys110, Gly130, 152 to 154 (DPS), 181 to 182 (IE), Met196, Tyr200, and Arg315.

This sequence belongs to the class I-like SAM-binding methyltransferase superfamily. CmoB family. As to quaternary structure, homotetramer.

It catalyses the reaction carboxy-S-adenosyl-L-methionine + 5-hydroxyuridine(34) in tRNA = 5-carboxymethoxyuridine(34) in tRNA + S-adenosyl-L-homocysteine + H(+). Functionally, catalyzes carboxymethyl transfer from carboxy-S-adenosyl-L-methionine (Cx-SAM) to 5-hydroxyuridine (ho5U) to form 5-carboxymethoxyuridine (cmo5U) at position 34 in tRNAs. This chain is tRNA U34 carboxymethyltransferase, found in Aliivibrio fischeri (strain MJ11) (Vibrio fischeri).